A 775-amino-acid chain; its full sequence is Rab3 GTPase-activating protein catalytic subunit (775 aa).

Phosphoserine occurs at positions 173, 330, 373, 375, and 384. A disordered region spans residues 324–351 (DEGKKTSPSDSMTKAYPADAGKAGGQLG). Residues 386–414 (AEDLRGNGQESTKKGGPKDMAPLKPEGRL) form a disordered region. Ser-458 carries the phosphoserine modification.

The protein belongs to the Rab3-GAP catalytic subunit family. In terms of assembly, the Rab3 GTPase-activating complex is a heterodimer composed of Rab3gap1 and Rab3gap2. The Rab3 GTPase-activating complex interacts with DMXL2. Interacts with LMAN1.

It localises to the cytoplasm. The protein localises to the endoplasmic reticulum. Its subcellular location is the golgi apparatus. It is found in the cis-Golgi network. Its function is as follows. Catalytic subunit of the Rab3 GTPase-activating (Rab3GAP) complex composed of RAB3GAP1 and RAB3GAP2, which has GTPase-activating protein (GAP) activity towards various Rab3 subfamily members (RAB3A, RAB3B, RAB3C and RAB3D), RAB5A and RAB43, and guanine nucleotide exchange factor (GEF) activity towards RAB18. As part of the Rab3GAP complex, acts as a GAP for Rab3 proteins by converting active RAB3-GTP to the inactive form RAB3-GDP. Rab3 proteins are involved in regulated exocytosis of neurotransmitters and hormones. The Rab3GAP complex, acts as a GEF for RAB18 by promoting the conversion of inactive RAB18-GDP to the active form RAB18-GTP. Recruits and stabilizes RAB18 at the cis-Golgi membrane where RAB18 is most likely activated. Also involved in RAB18 recruitment at the endoplasmic reticulum (ER) membrane where it maintains proper ER structure. Required for normal eye and brain development. May participate in neurodevelopmental processes such as proliferation, migration and differentiation before synapse formation, and non-synaptic vesicular release of neurotransmitters. In Rattus norvegicus (Rat), this protein is Rab3 GTPase-activating protein catalytic subunit.